Consider the following 344-residue polypeptide: Dihydroorotate dehydrogenase (quinone) (344 aa).

FMN contacts are provided by residues 65–69 and Thr89; that span reads AGLDK. Lys69 is a binding site for substrate. Residue 114-118 coordinates substrate; sequence NRMGF. The FMN site is built by Asn145 and Asn178. Asn178 is a substrate binding site. The active-site Nucleophile is Ser181. Asn183 serves as a coordination point for substrate. 2 residues coordinate FMN: Lys223 and Thr251. Residue 252-253 coordinates substrate; sequence NT. FMN contacts are provided by residues Gly274, Gly303, and 324 to 325; that span reads YT.

This sequence belongs to the dihydroorotate dehydrogenase family. Type 2 subfamily. As to quaternary structure, monomer. Requires FMN as cofactor.

Its subcellular location is the cell membrane. It carries out the reaction (S)-dihydroorotate + a quinone = orotate + a quinol. It participates in pyrimidine metabolism; UMP biosynthesis via de novo pathway; orotate from (S)-dihydroorotate (quinone route): step 1/1. In terms of biological role, catalyzes the conversion of dihydroorotate to orotate with quinone as electron acceptor. The chain is Dihydroorotate dehydrogenase (quinone) from Ralstonia nicotianae (strain ATCC BAA-1114 / GMI1000) (Ralstonia solanacearum).